Consider the following 349-residue polypeptide: Protein-glutamate methylesterase/protein-glutamine glutaminase (349 aa).

The Response regulatory domain maps to Arg5–Leu122. Asp56 carries the 4-aspartylphosphate modification. The 193-residue stretch at Leu152–Gly344 folds into the CheB-type methylesterase domain. Residues Ser164, His190, and Asp286 contribute to the active site.

The protein belongs to the CheB family. In terms of processing, phosphorylated by CheA. Phosphorylation of the N-terminal regulatory domain activates the methylesterase activity.

Its subcellular location is the cytoplasm. The catalysed reaction is [protein]-L-glutamate 5-O-methyl ester + H2O = L-glutamyl-[protein] + methanol + H(+). It catalyses the reaction L-glutaminyl-[protein] + H2O = L-glutamyl-[protein] + NH4(+). Functionally, involved in chemotaxis. Part of a chemotaxis signal transduction system that modulates chemotaxis in response to various stimuli. Catalyzes the demethylation of specific methylglutamate residues introduced into the chemoreceptors (methyl-accepting chemotaxis proteins or MCP) by CheR. Also mediates the irreversible deamidation of specific glutamine residues to glutamic acid. The polypeptide is Protein-glutamate methylesterase/protein-glutamine glutaminase (Yersinia pestis bv. Antiqua (strain Antiqua)).